The primary structure comprises 456 residues: tRNA modification GTPase MnmE (456 aa).

Residues Arg23, Glu85, and Arg124 each contribute to the (6S)-5-formyl-5,6,7,8-tetrahydrofolate site. The TrmE-type G domain occupies 220–376 (GVAVLIAGKP…LKESIFQTFI (157 aa)). Residue Asn230 participates in K(+) binding. GTP contacts are provided by residues 230 to 235 (NVGKSS), 249 to 255 (TSVPGTT), and 274 to 277 (DTAG). Residue Ser234 coordinates Mg(2+). Positions 249, 251, and 254 each coordinate K(+). Thr255 lines the Mg(2+) pocket. A (6S)-5-formyl-5,6,7,8-tetrahydrofolate-binding site is contributed by Lys456.

This sequence belongs to the TRAFAC class TrmE-Era-EngA-EngB-Septin-like GTPase superfamily. TrmE GTPase family. In terms of assembly, homodimer. Heterotetramer of two MnmE and two MnmG subunits. K(+) is required as a cofactor.

Its subcellular location is the cytoplasm. Functionally, exhibits a very high intrinsic GTPase hydrolysis rate. Involved in the addition of a carboxymethylaminomethyl (cmnm) group at the wobble position (U34) of certain tRNAs, forming tRNA-cmnm(5)s(2)U34. This chain is tRNA modification GTPase MnmE, found in Geobacter sulfurreducens (strain ATCC 51573 / DSM 12127 / PCA).